The chain runs to 118 residues: MSTSVKQTEARAIAKYIRMSPFKVRRVLKQIRGRSYKEALMILEFMPYAACKPVLQLLQSAAANAQNNYGLQKDQMIVNYAYADPGPVLKRFRPRAQGRGFKIKKPTCHITVSLKEVL.

Belongs to the universal ribosomal protein uL22 family. In terms of assembly, part of the 50S ribosomal subunit.

Its subcellular location is the plastid. It is found in the chloroplast. In terms of biological role, this protein binds specifically to 23S rRNA. The globular domain of the protein is located near the polypeptide exit tunnel on the outside of the subunit, while an extended beta-hairpin is found that lines the wall of the exit tunnel in the center of the 70S ribosome. This is Large ribosomal subunit protein uL22c (rpl22) from Rhodomonas salina (Cryptomonas salina).